We begin with the raw amino-acid sequence, 392 residues long: BURP domain protein RD22 (392 aa).

The N-terminal stretch at 1 to 22 (MAIRLPLICLLGSFMVVAIAAD) is a signal peptide. TXV repeat units follow at residues 56–58 (TNV), 78–80 (TAV), 100–102 (THV), and 125–127 (TDV). The segment at 57-164 (NVQVGKGGVN…PFVYNYAAKE (108 aa)) is 5 X approximate repeats. The interval 61 to 136 (GKGGVNVNTH…VGVGKGGVTV (76 aa)) is disordered. Residues 94 to 114 (GKPGGGTHVSVGSGKGHGGGV) show a composition bias toward gly residues. The region spanning 176 to 392 (FFLEKDLVRG…PETHVVWFSY (217 aa)) is the BURP domain.

Expressed in seed. Highest expression in leaves and guard cells.

Its function is as follows. Acts to suppress chlorophyll degradation under moisture stress. The chain is BURP domain protein RD22 from Arabidopsis thaliana (Mouse-ear cress).